The chain runs to 448 residues: Death-associated protein kinase 3 (448 aa).

Residues tyrosine 13–isoleucine 275 form the Protein kinase domain. Residues leucine 19 to valine 27 and lysine 42 each bind ATP. Aspartate 139 functions as the Proton acceptor in the catalytic mechanism. An activation segment region spans residues aspartate 161–glycine 204. Residues threonine 180 and threonine 225 each carry the phosphothreonine modification. Threonine 265 bears the Phosphothreonine; by autocatalysis mark. Threonine 265 is subject to Phosphothreonine; by ROCK1. Serine 304 bears the Phosphoserine; by DAPK1 mark. Residue serine 306 is modified to Phosphoserine; by autocatalysis and DAPK1. 3 positions are modified to phosphoserine; by DAPK1: serine 307, serine 313, and serine 321. The segment at alanine 390–arginine 448 is interaction with CDC5L. The interval leucine 418 to arginine 448 is required for interaction with ATF4 but not with PAWR. The interval valine 422–leucine 436 is leucine-zipper.

This sequence belongs to the protein kinase superfamily. CAMK Ser/Thr protein kinase family. DAP kinase subfamily. In terms of assembly, homooligomer in its kinase-active form (homotrimers and homodimers are reported); monomeric in its kinase-inactive form. Homodimerization is required for activation segment autophosphorylation. Interacts with DAXX, ATF4, NLK, TCF7L2, UBE2D1, UBE2D2, UBE2D3 and CDC5L. Interacts with PAWR; also demonstrated in aorta smooth muscle cells indicative for the cytoskeletal targeting function of PAWR. Interacts with AR; enhanced by AATF. Interacts with LUZP1; the interaction is likely to occur throughout the cell cycle and reduces the LUZP1-mediated suppression of MYL9 phosphorylation. Mg(2+) serves as cofactor. Post-translationally, ubiquitinated. Ubiquitination mediated by the UBE2D3 E3 ligase does not lead to proteasomal degradation, but influences promyelocytic leukemia protein nuclear bodies (PML-NBs) formation in the nucleus. In terms of processing, the phosphorylation status is critical for kinase activity, oligomerization and intracellular localization. Phosphorylation at Thr-180, Thr-225 and Thr-265 is essential for activity. The phosphorylated form is localized in the cytoplasm and nuclear translocation or retention is maximal when it is not phosphorylated. Phosphorylation increases the trimeric form, and its dephosphorylation favors a kinase-inactive monomeric form. Ubiquitously expressed in all tissue types examined. High levels in brain, heart, lung and spleen, lower expression in kidney, liver, skeletal muscle and testis. Isoform 2 is expressed in the smooth muscle.

The protein resides in the nucleus. It localises to the PML body. The protein localises to the cytoplasm. It is found in the cytoskeleton. Its subcellular location is the microtubule organizing center. The protein resides in the chromosome. It localises to the centromere. The protein localises to the spindle. It is found in the midbody. The enzyme catalyses L-seryl-[protein] + ATP = O-phospho-L-seryl-[protein] + ADP + H(+). It catalyses the reaction L-threonyl-[protein] + ATP = O-phospho-L-threonyl-[protein] + ADP + H(+). A sequential activation is proposed: autophosphorylation at consensus sites is leading to dimerization of the catalytic domain and activation segment exchange (producing an active confirmation of both kinase modules in trans) followed by phosphorylation at Thr-180 in the activation segment and at other regulatory sites. Phosphorylation at Thr-180, Thr-225 and Thr-265 is essential for activity. Inhibited by pyridone 6 (K00225), a potent, ATP-competitive inhibitor. Phosphorylation at Thr-180, Thr-225 and Thr-265 is essential for activity. Serine/threonine kinase which is involved in the regulation of apoptosis, autophagy, transcription, translation and actin cytoskeleton reorganization. Regulates both type I (caspase-dependent) apoptotic and type II (caspase-independent) autophagic cell deaths signal, depending on the cellular setting. Involved in formation of promyelocytic leukemia protein nuclear body (PML-NB). Involved in apoptosis involving PAWR which mediates cytoplasmic relocation; in vitro phosphorylates PAWR. Regulates myosin phosphorylation in both smooth muscle and non-muscle cells. In smooth muscle, regulates myosin either directly by phosphorylating MYL12B and MYL9 or through inhibition of smooth muscle myosin phosphatase (SMPP1M) via phosphorylation of PPP1R12A; the inhibition of SMPP1M functions to enhance muscle responsiveness to Ca(2+) and promote a contractile state. Phosphorylates MYL12B in non-muscle cells leading to reorganization of actin cytoskeleton such as in regulation of cell polarity and cell migration. Positively regulates canonical Wnt/beta-catenin signaling through interaction with NLK and TCF7L2; disrupts the NLK-TCF7L2 complex thereby influencing the phosphorylation of TCF7L2 by NLK. Phosphorylates RPL13A on 'Ser-77' upon interferon-gamma activation which is causing RPL13A release from the ribosome, RPL13A association with the GAIT complex and its subsequent involvement in transcript-selective translation inhibition. Phosphorylates STAT3 and enhances its transcriptional activity. Enhances transcription from AR-responsive promoters in a hormone- and kinase-dependent manner. Phosphorylates histone H3 on 'Thr-11' at centromeres during mitosis. This Rattus norvegicus (Rat) protein is Death-associated protein kinase 3 (Dapk3).